Here is a 212-residue protein sequence, read N- to C-terminus: FMN-dependent NAD(P)H:quinone oxidoreductase 1 (212 aa).

Residues Ser10, 16–18 (SQS), and 97–100 (MYNF) each bind FMN. Residues Asn99 and Tyr131 each contribute to the substrate site. FMN contacts are provided by residues 145-148 (SRGG) and Glu187. Residue Glu188 coordinates substrate.

It belongs to the azoreductase type 1 family. Homodimer. Homotetramer formed by a dimer of dimers when the ionic strength is high. FMN is required as a cofactor.

The enzyme catalyses 2 a quinone + NADPH + H(+) = 2 a 1,4-benzosemiquinone + NADP(+). It carries out the reaction 2 a quinone + NADH + H(+) = 2 a 1,4-benzosemiquinone + NAD(+). The catalysed reaction is N,N-dimethyl-1,4-phenylenediamine + anthranilate + 2 NAD(+) = 2-(4-dimethylaminophenyl)diazenylbenzoate + 2 NADH + 2 H(+). Its activity is regulated as follows. Azoreductase activity increases with salt strength. Its function is as follows. Quinone reductase that provides resistance to thiol-specific stress caused by electrophilic quinones. Shows a preference for benzoquinones. Also exhibits azoreductase activity. Catalyzes the reductive cleavage of the azo bond in aromatic azo compounds to the corresponding amines. NADPH is the preferred electron donor for azoreductase activity, but it can also use NADH. Can reduce different classes of azo dyes, including the common azo dyes methyl red and p-aminoazobenzene sulfonamide (PAABSA). Can activate several azo pro-drugs used in the treatment of inflammatory bowel disease (IBD), including balsalazide, sulfasalazine and olsalazine. Also acts as a nitrodeductase, and can reduce and hence activate the nitroaromatic drug nitrofurazone, a broad spectrum antibiotic. The protein is FMN-dependent NAD(P)H:quinone oxidoreductase 1 of Pseudomonas aeruginosa (strain ATCC 15692 / DSM 22644 / CIP 104116 / JCM 14847 / LMG 12228 / 1C / PRS 101 / PAO1).